Reading from the N-terminus, the 134-residue chain is Thionin-2.1 (134 aa).

The N-terminal stretch at 1 to 24 (MKGRILILSLLIMSLVMAQVQVEA) is a signal peptide. 3 cysteine pairs are disulfide-bonded: Cys-27–Cys-61, Cys-28–Cys-55, and Cys-40–Cys-49. Residues 68 to 134 (AILENSADAT…VVPPGPPKLL (67 aa)) constitute a propeptide, acidic domain.

Belongs to the plant thionin (TC 1.C.44) family. In terms of tissue distribution, detected in rosette leaves and at a very high level in flowers and in siliques.

Its subcellular location is the secreted. Seems to function as a defense factor. Thionins are small plant proteins which are toxic to animal cells. They seem to exert their toxic effect at the level of the cell membrane. Their precise function is not known. The protein is Thionin-2.1 (THI2.1) of Arabidopsis thaliana (Mouse-ear cress).